Consider the following 327-residue polypeptide: Phenylalanine--tRNA ligase alpha subunit (327 aa).

E252 serves as a coordination point for Mg(2+).

The protein belongs to the class-II aminoacyl-tRNA synthetase family. Phe-tRNA synthetase alpha subunit type 1 subfamily. Tetramer of two alpha and two beta subunits. Mg(2+) is required as a cofactor.

Its subcellular location is the cytoplasm. It catalyses the reaction tRNA(Phe) + L-phenylalanine + ATP = L-phenylalanyl-tRNA(Phe) + AMP + diphosphate + H(+). This Salmonella choleraesuis (strain SC-B67) protein is Phenylalanine--tRNA ligase alpha subunit.